The following is a 616-amino-acid chain: Prolactin receptor (616 aa).

A signal peptide spans 1-24; sequence MKENVASMIVFLLLLFLNIRLLKG. Topologically, residues 25-234 are extracellular; it reads QSPPGKPFIF…QIPNDFTMKD (210 aa). 2 Fibronectin type-III domains span residues 27–128 and 129–229; these read PPGK…VEPD and PPVN…IPND. The cysteines at positions 36 and 46 are disulfide-linked. N-linked (GlcNAc...) asparagine glycosylation is present at N59. A disulfide bridge connects residues C75 and C86. Residues N104 and N132 are each glycosylated (N-linked (GlcNAc...) asparagine). Zn(2+)-binding residues include D211 and H212. Residues 215-219 carry the WSXWS motif motif; the sequence is WSVWS. Residues 235 to 258 form a helical membrane-spanning segment; the sequence is ITVWIFVAVLSTIICLIMVWAVAL. The Cytoplasmic segment spans residues 259-616; that stretch reads KGYSMVTCIF…DPACFMHSLH (358 aa). A Box 1 motif motif is present at residues 267–275; the sequence is IFPPVPGPK. Disordered stretches follow at residues 326–375, 454–492, and 568–593; these read MPAH…STFH, QSSKTTEAAGEEKATKQREVESSHSKAEQDTGWLLPKEK, and ESTKEAPPSPSQNQAEKDLSSFSTAP. A compositionally biased stretch (basic and acidic residues) spans 463-482; it reads GEEKATKQREVESSHSKAEQ.

It belongs to the type I cytokine receptor family. Type 1 subfamily. In terms of assembly, interacts with SMARCA1. Interacts with NEK3 and VAV2 and this interaction is prolactin-dependent.

The protein resides in the membrane. Its function is as follows. This is a receptor for the anterior pituitary hormone prolactin. The polypeptide is Prolactin receptor (PRLR) (Oryctolagus cuniculus (Rabbit)).